Consider the following 270-residue polypeptide: 3-phenylpropionate-dihydrodiol/cinnamic acid-dihydrodiol dehydrogenase (270 aa).

10-34 contacts NAD(+); sequence FITGGGSGLGLALVERFIEEGAQVA. Substrate is bound at residue Ser-143. The active-site Proton acceptor is the Tyr-156.

The protein belongs to the short-chain dehydrogenases/reductases (SDR) family.

It catalyses the reaction 3-(cis-5,6-dihydroxycyclohexa-1,3-dien-1-yl)propanoate + NAD(+) = 3-(2,3-dihydroxyphenyl)propanoate + NADH + H(+). It carries out the reaction (2E)-3-(cis-5,6-dihydroxycyclohexa-1,3-dien-1-yl)prop-2-enoate + NAD(+) = (2E)-3-(2,3-dihydroxyphenyl)prop-2-enoate + NADH + H(+). It functions in the pathway aromatic compound metabolism; 3-phenylpropanoate degradation. Its function is as follows. Converts 3-phenylpropionate-dihydrodiol (PP-dihydrodiol) and cinnamic acid-dihydrodiol (CI-dihydrodiol) into 3-(2,3-dihydroxylphenyl)propanoic acid (DHPP) and 2,3-dihydroxicinnamic acid (DHCI), respectively. The chain is 3-phenylpropionate-dihydrodiol/cinnamic acid-dihydrodiol dehydrogenase from Shigella flexneri serotype 5b (strain 8401).